An 842-amino-acid chain; its full sequence is Elongation factor 2 (842 aa).

Positions 17–346 (TNVRNMSVIA…MIVLHLPSPV (330 aa)) constitute a tr-type G domain. GTP contacts are provided by residues 26-33 (AHVDHGKS), 158-161 (NKVD), and 213-215 (SGL). Residue His-699 is modified to Diphthamide.

This sequence belongs to the TRAFAC class translation factor GTPase superfamily. Classic translation factor GTPase family. EF-G/EF-2 subfamily.

The protein localises to the cytoplasm. The enzyme catalyses GTP + H2O = GDP + phosphate + H(+). Its function is as follows. Catalyzes the GTP-dependent ribosomal translocation step during translation elongation. During this step, the ribosome changes from the pre-translocational (PRE) to the post-translocational (POST) state as the newly formed A-site-bound peptidyl-tRNA and P-site-bound deacylated tRNA move to the P and E sites, respectively. Catalyzes the coordinated movement of the two tRNA molecules, the mRNA and conformational changes in the ribosome. The sequence is that of Elongation factor 2 (EFT2) from Candida albicans (strain SC5314 / ATCC MYA-2876) (Yeast).